The chain runs to 302 residues: N-acetylmuramic acid 6-phosphate etherase (302 aa).

Positions 57–220 (VSEKLKNNGR…TTAVMIKLGK (164 aa)) constitute an SIS domain. The active-site Proton donor is Glu85. Glu116 is an active-site residue.

The protein belongs to the GCKR-like family. MurNAc-6-P etherase subfamily. As to quaternary structure, homodimer.

The catalysed reaction is N-acetyl-D-muramate 6-phosphate + H2O = N-acetyl-D-glucosamine 6-phosphate + (R)-lactate. It participates in amino-sugar metabolism; N-acetylmuramate degradation. Its function is as follows. Specifically catalyzes the cleavage of the D-lactyl ether substituent of MurNAc 6-phosphate, producing GlcNAc 6-phosphate and D-lactate. This is N-acetylmuramic acid 6-phosphate etherase from Clostridium acetobutylicum (strain ATCC 824 / DSM 792 / JCM 1419 / IAM 19013 / LMG 5710 / NBRC 13948 / NRRL B-527 / VKM B-1787 / 2291 / W).